We begin with the raw amino-acid sequence, 380 residues long: Tryptophan 2,3-dioxygenase (380 aa).

Residues 57-61 (FIITH) and Arg-128 each bind substrate. His-313 provides a ligand contact to heme. Residue Thr-328 coordinates substrate.

Belongs to the tryptophan 2,3-dioxygenase family. In terms of assembly, homotetramer. Dimer of dimers. The cofactor is heme.

The catalysed reaction is L-tryptophan + O2 = N-formyl-L-kynurenine. The protein operates within amino-acid degradation; L-tryptophan degradation via kynurenine pathway; L-kynurenine from L-tryptophan: step 1/2. It functions in the pathway pigment biosynthesis; ommochrome biosynthesis. Heme-dependent dioxygenase that catalyzes the oxidative cleavage of the L-tryptophan (L-Trp) pyrrole ring and converts L-tryptophan to N-formyl-L-kynurenine. Catalyzes the oxidative cleavage of the indole moiety. This chain is Tryptophan 2,3-dioxygenase, found in Drosophila mojavensis (Fruit fly).